The sequence spans 1752 residues: Serine protease/ABC transporter B family protein tagA (1752 aa).

Positions 1–24 (MNKKLFIFGLSLFLFLFIFNLSLS) are cleaved as a signal peptide. The N-linked (GlcNAc...) asparagine glycan is linked to N20. One can recognise a Peptidase S8 domain in the interval 280 to 696 (HYSIQSGSAS…FGNIQLSKLI (417 aa)). Active-site charge relay system residues include D312 and H352. N-linked (GlcNAc...) asparagine glycans are attached at residues N400 and N557. Catalysis depends on S625, which acts as the Charge relay system. N-linked (GlcNAc...) asparagine glycans are attached at residues N653, N785, and N823. A helical transmembrane segment spans residues 909–929 (IVLLGIFGIIIVGAVIFVLVC). Residues 946 to 1032 (DKGGDGNSIR…QNNSPQYDED (87 aa)) form a disordered region. The segment covering 962 to 994 (NNNNNNNNNNNNNNNNNNNNNNNNNNNNNNNNN) has biased composition (low complexity). N-linked (GlcNAc...) asparagine glycosylation is present at N993. The segment covering 995–1004 (SNGKQSNIEL) has biased composition (polar residues). Residues 1013-1028 (GTPNGDDQQQQNNSPQ) are compositionally biased toward low complexity. 6 consecutive transmembrane segments (helical) span residues 1058-1078 (ILGL…AVPL), 1102-1122 (FALI…LLAL), 1174-1194 (IPHM…LFII), 1200-1220 (LVVL…GGYI), 1285-1305 (TSGI…SSLV), and 1315-1335 (LIAF…VASL). In terms of domain architecture, ABC transmembrane type-1 spans 1059 to 1341 (LGLALFLSFI…VASLYTTYKS (283 aa)). One can recognise an ABC transporter domain in the interval 1374–1610 (IQFNKVSFAY…KGMFYDFVQI (237 aa)). 1409–1416 (GPSGGGKS) serves as a coordination point for ATP. The segment at 1621–1686 (IQLPSNSRNT…SRSPPPMWRQ (66 aa)) is disordered. The span at 1631–1642 (RNADKLRNRSET) shows a compositional bias: basic and acidic residues. Residues N1638, N1670, and N1694 are each glycosylated (N-linked (GlcNAc...) asparagine).

In the C-terminal section; belongs to the ABC transporter superfamily. ABCB family. Multidrug resistance exporter (TC 3.A.1.201) subfamily. This sequence in the N-terminal section; belongs to the peptidase S8 family.

The protein localises to the membrane. In terms of biological role, required for a general cell fate determination at the onset of development. Required for the specification of an initial population of prespore cells in which tagA is expressed. Required for normal SDF-2 signaling during spore encapsulation. This Dictyostelium discoideum (Social amoeba) protein is Serine protease/ABC transporter B family protein tagA (tagA).